Consider the following 188-residue polypeptide: F7-2 fimbrial protein (188 aa).

An N-terminal signal peptide occupies residues Met1–Ala21. An intrachain disulfide couples Cys43 to Cys82.

Belongs to the fimbrial protein family.

Its subcellular location is the fimbrium. Functionally, fimbriae (also called pili), polar filaments radiating from the surface of the bacterium to a length of 0.5-1.5 micrometers and numbering 100-300 per cell, enable bacteria to colonize the epithelium of specific host organs. The protein is F7-2 fimbrial protein (F7-2) of Escherichia coli O6:H1 (strain CFT073 / ATCC 700928 / UPEC).